We begin with the raw amino-acid sequence, 100 residues long: MSQDTKYEIMYIIRPNIDEEAKTALVERFDTILKDNGAEVIESKDWEKRRLAYEMNGFREGIYHIVNVTSPSTAGAINEFDRLAKINDDIIRHMIVKVEA.

It belongs to the bacterial ribosomal protein bS6 family.

Its function is as follows. Binds together with bS18 to 16S ribosomal RNA. This Enterococcus faecalis (strain ATCC 700802 / V583) protein is Small ribosomal subunit protein bS6.